The primary structure comprises 234 residues: ATP synthase subunit a 2 (234 aa).

5 consecutive transmembrane segments (helical) span residues 20–40, 78–98, 107–127, 169–189, and 194–214; these read ATLIFTWLVMGVLVVGSWFVT, YLPFIGTLFIFIALSNLLSVI, SLSTTTALALCVFFAVPLYGV, VMSGTMIVGILLSVAPLFFPV, and LGLLTGVIQAYIFAILAMVFI.

The protein belongs to the ATPase A chain family. As to quaternary structure, F-type ATPases have 2 components, CF(1) - the catalytic core - and CF(0) - the membrane proton channel. CF(1) has five subunits: alpha(3), beta(3), gamma(1), delta(1), epsilon(1). CF(0) has four main subunits: a, b, b' and c.

Its subcellular location is the cellular thylakoid membrane. Key component of the proton channel; it plays a direct role in the translocation of protons across the membrane. The chain is ATP synthase subunit a 2 from Acaryochloris marina (strain MBIC 11017).